A 261-amino-acid chain; its full sequence is MAQKTSGLIQRCRFLLLMILFLPHVMTSSVLSVNGKTENYILDTEPGLQESLKCAVQNHIRDEELLWYREDGRVDLKSGNKINSSSVCVSGISEDDNGITFTCKLQRNQSVSISVVLNVTFPPLLSGNDFQTAEEGSDVKLVCNVKSNPQAQMMWYKNNGILNLENHHQIQQTSEYFQLSITKVKKSDNGTYSCIANSLIETKTKDFHLIVKDKGSTVPIEPIIAACVVVFLTLVFGVIARRKRIMKLCRKDQGPQCRTAL.

The N-terminal stretch at 1-27 is a signal peptide; sequence MAQKTSGLIQRCRFLLLMILFLPHVMT. In terms of domain architecture, Ig-like C2-type 1 spans 28-114; sequence SSVLSVNGKT…LQRNQSVSIS (87 aa). Over 28-219 the chain is Extracellular; the sequence is SSVLSVNGKT…IVKDKGSTVP (192 aa). Cysteine 54 and cysteine 103 are oxidised to a cystine. Residues asparagine 83, asparagine 108, asparagine 118, and asparagine 189 are each glycosylated (N-linked (GlcNAc...) asparagine). One can recognise an Ig-like C2-type 2 domain in the interval 122-208; it reads PPLLSGNDFQ…LIETKTKDFH (87 aa). Cysteine 143 and cysteine 194 form a disulfide bridge. The chain crosses the membrane as a helical span at residues 220–240; that stretch reads IEPIIAACVVVFLTLVFGVIA. Over 241–261 the chain is Cytoplasmic; sequence RRKRIMKLCRKDQGPQCRTAL.

Homodimer. Post-translationally, N-glycosylated.

Its subcellular location is the cell membrane. It is found in the cytoplasm. May control cell-cell adhesion, cell migration and proliferation, cell morphology, and protects renal epithelial cells from oxidative cell injury to promote cell survival. This is Transmembrane and immunoglobulin domain-containing protein 1 from Bos taurus (Bovine).